We begin with the raw amino-acid sequence, 91 residues long: Small ribosomal subunit protein bS18 (91 aa).

A disordered region spans residues 1–27; the sequence is MTQQSNTERKPRAKGPKRPRKPKVDPF. A compositionally biased stretch (basic residues) spans 11 to 21; that stretch reads PRAKGPKRPRK.

The protein belongs to the bacterial ribosomal protein bS18 family. In terms of assembly, part of the 30S ribosomal subunit. Forms a tight heterodimer with protein bS6.

Its function is as follows. Binds as a heterodimer with protein bS6 to the central domain of the 16S rRNA, where it helps stabilize the platform of the 30S subunit. The chain is Small ribosomal subunit protein bS18 from Deinococcus geothermalis (strain DSM 11300 / CIP 105573 / AG-3a).